Reading from the N-terminus, the 256-residue chain is uncharacterized protein (256 aa).

This is an uncharacterized protein from Saccharomyces cerevisiae (strain ATCC 204508 / S288c) (Baker's yeast).